Consider the following 264-residue polypeptide: Tritrans,polycis-undecaprenyl-diphosphate synthase (geranylgeranyl-diphosphate specific) (264 aa).

The active site involves Asp-43. A Mg(2+)-binding site is contributed by Asp-43. Substrate contacts are provided by residues 44-47, Trp-48, His-60, and 88-90; these read GNRR and STE. The active-site Proton acceptor is the Asn-91. Substrate is bound by residues Phe-92, Arg-94, Arg-213, and 219 to 221; that span reads RIS. Glu-232 lines the Mg(2+) pocket.

This sequence belongs to the UPP synthase family. In terms of assembly, homodimer. The cofactor is Mg(2+).

The enzyme catalyses geranylgeranyl diphosphate + 7 isopentenyl diphosphate = tri-trans,hepta-cis-undecaprenyl diphosphate + 7 diphosphate. Its function is as follows. Catalyzes the sequential condensation of isopentenyl diphosphate (IPP) with geranylgeranyl diphosphate (GGPP) to yield (2Z,6Z,10Z,14Z,18Z,22Z,26Z,30E,34E,38E)-undecaprenyl diphosphate (tritrans,heptacis-UPP). It is probably the precursor of glycosyl carrier lipids. This Pyrococcus horikoshii (strain ATCC 700860 / DSM 12428 / JCM 9974 / NBRC 100139 / OT-3) protein is Tritrans,polycis-undecaprenyl-diphosphate synthase (geranylgeranyl-diphosphate specific).